The chain runs to 683 residues: Synaptic vesicle glycoprotein 2B (683 aa).

The interval 1–42 (MDDYKYQDNYGGYAPSDGYYRGNESNPEEDAQSDVTEGHDEE) is disordered. The Cytoplasmic portion of the chain corresponds to 1–108 (MDDYKYQDNY…MDECGHGRFQ (108 aa)). S33 bears the Phosphoserine mark. Residue T36 is modified to Phosphothreonine. The chain crosses the membrane as a helical span at residues 109 to 129 (WILFFVLGLALMADGVEVFVV). Residues 130-148 (SFALPSAEKDMCLSSSKKG) are Extracellular-facing. The helical transmembrane segment at 149 to 169 (MLGMIVYLGMMAGAFILGGLA) threads the bilayer. The Cytoplasmic portion of the chain corresponds to 170 to 182 (DKLGRKRVLSMSL). The chain crosses the membrane as a helical span at residues 183 to 203 (AVNASFASLSSFVQGYGAFLF). Over 204–205 (CR) the chain is Extracellular. A helical transmembrane segment spans residues 206-226 (LISGIGIGGALPIVFAYFSEF). Residues 227-237 (LSREKRGEHLS) lie on the Cytoplasmic side of the membrane. The helical transmembrane segment at 238–258 (WLGIFWMTGGLYASAMAWSII) threads the bilayer. The Extracellular segment spans residues 259-277 (PHYGWGFSMGTNYHFHSWR). A helical transmembrane segment spans residues 278–298 (VFVIVCALPCTVSMVALKFMP). At 299-390 (ESPRFLLEMG…CVMGPYRMNT (92 aa)) the chain is on the cytoplasmic side. The chain crosses the membrane as a helical span at residues 391 to 411 (LILAVVWFAMAFSYYGLTVWF). The Extracellular portion of the chain corresponds to 412–535 (PDMIRYFQDE…CHMDLEQDND (124 aa)). The residue at position 423 (Y423) is a Phosphotyrosine. N-linked (GlcNAc...) asparagine glycosylation is found at N441, N491, and N516. A helical transmembrane segment spans residues 536–556 (FLIYLVSFLGSLSVLPGNIIS). The Cytoplasmic portion of the chain corresponds to 557–565 (ALLMDRIGR). A helical transmembrane segment spans residues 566 to 586 (LKMIGGSMLISAVCCFFLFFG). Topologically, residues 587–592 (NSESAM) are extracellular. The chain crosses the membrane as a helical span at residues 593–613 (IGWQCLFCGTSIAAWNALDVI). Topologically, residues 614–626 (TVELYPTNQRATA) are cytoplasmic. A helical membrane pass occupies residues 627-649 (FGILNGLCKFGAILGNTIFASFV). Residues 650–653 (GITK) lie on the Extracellular side of the membrane. A helical membrane pass occupies residues 654–672 (VVPILLAAASLVGGGLIAL). The Cytoplasmic segment spans residues 673 to 683 (RLPETREQVLM).

It belongs to the major facilitator superfamily. In terms of assembly, interacts with SYT1 in a calcium-independent manner. Forms a complex with SYT1, syntaxin-1 and SNAP25. As to quaternary structure, (Microbial infection) Interacts with C.botulinum neurotoxin type A2 (BoNT/A, botA). Interaction is improved by glycosylation of SV2. Post-translationally, N-glycosylated. In terms of processing, the N-terminal cytoplasmic domain is phosphorylated by CK1.

The protein resides in the cytoplasmic vesicle. It localises to the secretory vesicle. Its subcellular location is the synaptic vesicle membrane. The protein localises to the acrosome. Probably plays a role in the control of regulated secretion in neural and endocrine cells. Its function is as follows. (Microbial infection) Receptor for the C.botulinum neurotoxin type A2 (BoNT/A, botA); glycosylation is not essential but enhances the interaction. Probably also serves as a receptor for the closely related C.botulinum neurotoxin type A1. The polypeptide is Synaptic vesicle glycoprotein 2B (SV2B) (Homo sapiens (Human)).